Reading from the N-terminus, the 174-residue chain is Crossover junction endodeoxyribonuclease RuvC (174 aa).

Catalysis depends on residues D8, E67, and D139. Mg(2+) is bound by residues D8, E67, and D139.

The protein belongs to the RuvC family. In terms of assembly, homodimer which binds Holliday junction (HJ) DNA. The HJ becomes 2-fold symmetrical on binding to RuvC with unstacked arms; it has a different conformation from HJ DNA in complex with RuvA. In the full resolvosome a probable DNA-RuvA(4)-RuvB(12)-RuvC(2) complex forms which resolves the HJ. Mg(2+) is required as a cofactor.

It is found in the cytoplasm. The catalysed reaction is Endonucleolytic cleavage at a junction such as a reciprocal single-stranded crossover between two homologous DNA duplexes (Holliday junction).. In terms of biological role, the RuvA-RuvB-RuvC complex processes Holliday junction (HJ) DNA during genetic recombination and DNA repair. Endonuclease that resolves HJ intermediates. Cleaves cruciform DNA by making single-stranded nicks across the HJ at symmetrical positions within the homologous arms, yielding a 5'-phosphate and a 3'-hydroxyl group; requires a central core of homology in the junction. The consensus cleavage sequence is 5'-(A/T)TT(C/G)-3'. Cleavage occurs on the 3'-side of the TT dinucleotide at the point of strand exchange. HJ branch migration catalyzed by RuvA-RuvB allows RuvC to scan DNA until it finds its consensus sequence, where it cleaves and resolves the cruciform DNA. The chain is Crossover junction endodeoxyribonuclease RuvC from Pseudomonas fluorescens (strain ATCC BAA-477 / NRRL B-23932 / Pf-5).